The chain runs to 150 residues: MTTPAKKRLMWDFKRLQKDPPVGISGAPQDNNIMHWNALIFGPEDTPWDGGTFKLTLHFTEDYPNKPPIVRFVSRMFHPNIYADGSICLDILQNQWSPIYDVAAVLTSIQSLLCDPNPDSPANAEAARLFSENKREYNRKVIEIVEQSYV.

In terms of domain architecture, UBC core spans 4-150 (PAKKRLMWDF…VIEIVEQSYV (147 aa)). The active-site Glycyl thioester intermediate is C88.

The protein belongs to the ubiquitin-conjugating enzyme family. As to expression, expressed in all tissues examined. Lower levels found in leaves.

It carries out the reaction S-ubiquitinyl-[E1 ubiquitin-activating enzyme]-L-cysteine + [E2 ubiquitin-conjugating enzyme]-L-cysteine = [E1 ubiquitin-activating enzyme]-L-cysteine + S-ubiquitinyl-[E2 ubiquitin-conjugating enzyme]-L-cysteine.. The protein operates within protein modification; protein ubiquitination. Its function is as follows. Accepts the ubiquitin from the E1 complex and catalyzes its covalent attachment to other proteins. This is Ubiquitin-conjugating enzyme E2 3 (UBC3) from Arabidopsis thaliana (Mouse-ear cress).